We begin with the raw amino-acid sequence, 206 residues long: dCTP deaminase, dUMP-forming (206 aa).

DCTP contacts are provided by residues 117–122 (RSSFGR), D135, 143–145 (TLE), Q163, Y177, K184, and Q188. Residue E145 is the Proton donor/acceptor of the active site.

The protein belongs to the dCTP deaminase family. In terms of assembly, homotrimer.

The catalysed reaction is dCTP + 2 H2O = dUMP + NH4(+) + diphosphate. The protein operates within pyrimidine metabolism; dUMP biosynthesis; dUMP from dCTP: step 1/1. In terms of biological role, bifunctional enzyme that catalyzes both the deamination of dCTP to dUTP and the hydrolysis of dUTP to dUMP without releasing the toxic dUTP intermediate. The chain is dCTP deaminase, dUMP-forming from Methanococcus vannielii (strain ATCC 35089 / DSM 1224 / JCM 13029 / OCM 148 / SB).